The following is a 751-amino-acid chain: Cytosolic neutral trehalase (751 aa).

Polar residues predominate over residues 1-10 (MSQVNTSQGP). Positions 1-59 (MSQVNTSQGPVAQGRQRRLSSLSEFNDPFSNAEVYYGPPTDPRKQKQAKPAKINRTRTM) are disordered. Ser-2 bears the N-acetylserine mark. A phosphoserine; by PKA mark is found at Ser-20 and Ser-21. Ser-23 is modified (phosphoserine). Basic residues predominate over residues 45-55 (QKQAKPAKINR). Position 58 is a phosphothreonine (Thr-58). Position 60 is a phosphoserine; by PKA (Ser-60). Ser-66 is subject to Phosphoserine. A disordered region spans residues 73–92 (FGKLQQTRRGSEDDTYSSSQ). Ser-83 carries the phosphoserine; by PKA modification. Residues Asp-114, Asp-116, Asn-118, Gln-120, and Asp-125 each contribute to the Ca(2+) site. Substrate contacts are provided by residues Arg-302, 309-310 (WD), Asn-346, 355-357 (RSQ), Glu-424, Arg-473, and Gly-476. Residues Asp-478 and Glu-674 each act as proton donor/acceptor in the active site.

Belongs to the glycosyl hydrolase 37 family. In terms of assembly, monomer. Interacts with BMH1 dimers; the interaction is direct and activates NTH1. Interacts with BMH2. Ca(2+) serves as cofactor. Phosphorylated by protein kinase A (PKA); phosphorylation at Ser-60 and Ser-83 is required for activation by the 14-3-3 proteins BMH1 and BMH2.

The protein resides in the cytoplasm. It carries out the reaction alpha,alpha-trehalose + H2O = alpha-D-glucose + beta-D-glucose. It functions in the pathway carbohydrate degradation. Its activity is regulated as follows. Activated by calcium. Activated by protein kinase A (PKA)-mediated phosphorylation. Functionally, hydrolyzes intracellular trehalose to glucose. The disaccharide trehalose serves as a storage carbohydrate that is mobilized during nutrient stress. Regulates the level of trehalose as a protectant for cell integrity during heat stress. In Saccharomyces cerevisiae (strain ATCC 204508 / S288c) (Baker's yeast), this protein is Cytosolic neutral trehalase.